A 772-amino-acid chain; its full sequence is Mitochondrial intermediate peptidase (772 aa).

The transit peptide at 1 to 42 directs the protein to the mitochondrion; the sequence is MFANSARNALKKRPQNLQPFRFQGCLFSKRANRPLTTKVQHL. His-556 provides a ligand contact to Zn(2+). Residue Glu-557 is part of the active site. His-560 and His-563 together coordinate Zn(2+).

This sequence belongs to the peptidase M3 family. Zn(2+) is required as a cofactor.

It localises to the mitochondrion matrix. The catalysed reaction is Release of an N-terminal octapeptide as second stage of processing of some proteins imported into the mitochondrion.. Functionally, cleaves proteins, imported into the mitochondrion, to their mature size. While most mitochondrial precursor proteins are processed to the mature form in one step by mitochondrial processing peptidase (MPP), the sequential cleavage by MIP of an octapeptide after initial processing by MPP is a required step for a subgroup of nuclear-encoded precursor proteins destined for the matrix or the inner membrane. The polypeptide is Mitochondrial intermediate peptidase (OCT1) (Laccaria bicolor (strain S238N-H82 / ATCC MYA-4686) (Bicoloured deceiver)).